The chain runs to 82 residues: Putative ribonuclease VapC34 (82 aa).

Residue Asp4 participates in Mg(2+) binding.

Belongs to the PINc/VapC protein family. Mg(2+) serves as cofactor.

Its function is as follows. Toxic component of a possible type II toxin-antitoxin (TA) system. A putative RNase. Its cognate antitoxin is VapB34. The chain is Putative ribonuclease VapC34 (vapC34) from Mycobacterium tuberculosis (strain CDC 1551 / Oshkosh).